Here is a 101-residue protein sequence, read N- to C-terminus: Large ribosomal subunit protein eL21 (101 aa).

Basic residues predominate over residues 1–18 (MVKHSKGYRTRSRSLLRK). Residues 1-24 (MVKHSKGYRTRSRSLLRKSPRERG) form a disordered region.

The protein belongs to the eukaryotic ribosomal protein eL21 family.

This chain is Large ribosomal subunit protein eL21 (rpl21e), found in Saccharolobus solfataricus (strain ATCC 35092 / DSM 1617 / JCM 11322 / P2) (Sulfolobus solfataricus).